Consider the following 421-residue polypeptide: Synaptotagmin-12 (421 aa).

Residues 1–18 (MAVDVTEYHLSVIKSPPG) lie on the Vesicular side of the membrane. A helical transmembrane segment spans residues 19-39 (WEVGVYAAGALALLGIAAVSL). At 40 to 421 (WKLWTSGSFP…VSMWHPVRRN (382 aa)) the chain is on the cytoplasmic side. Residue Ser-97 is modified to Phosphoserine; by PKA. A phosphoserine mark is found at Ser-99 and Ser-214. C2 domains lie at 152 to 272 (TLGQ…SGWL) and 283 to 416 (AVGE…SMWH).

The protein belongs to the synaptotagmin family. As to quaternary structure, homodimer. Can also form heterodimers. Interacts with SYT1. Phosphorylation of Ser-97 is required for mossy-fiber long-term potentiation. Expressed in the brain, specifically by neurons in the hippocampus, and in the adrenal medulla (at protein level).

It is found in the cytoplasmic vesicle. Its subcellular location is the secretory vesicle. The protein resides in the synaptic vesicle membrane. In terms of biological role, synaptic vesicle phosphoprotein that enhances spontaneous neurotransmitter release but does not effect induced neurotransmitter release. Unlike other synaptotagmins, it does not bind Ca(2+) or phospholipids. Essential for mossy-fiber long-term potentiation in the hippocampus. This Mus musculus (Mouse) protein is Synaptotagmin-12.